The sequence spans 496 residues: Splicing factor U2AF 65 kDa subunit (496 aa).

A compositionally biased stretch (basic and acidic residues) spans Met1–Gly26. The disordered stretch occupies residues Met1–Pro142. Residues Lys59–Ser77 show a composition bias toward basic residues. 2 stretches are compositionally biased toward basic and acidic residues: residues Arg78–Arg96 and Gly105–Phe138. 3 consecutive RRM domains span residues Arg184–Asp266, Asn291–Ala368, and Asn404–Val488.

Forms a heterodimer with the U2AF small subunit.

It localises to the nucleus. Functionally, necessary for the splicing of pre-mRNA. Binds to the polypyrimidine tract of introns early during spliceosome assembly. This is Splicing factor U2AF 65 kDa subunit (uaf-1) from Caenorhabditis elegans.